A 90-amino-acid chain; its full sequence is U7-theraphotoxin-Hhn1k (90 aa).

Residues 1 to 19 form the signal peptide; it reads MKTAIFTVVLALAVFAVLS. Positions 20–50 are excised as a propeptide; it reads FGWEANEKALSEEFTELIHEKEAASETEARE. 2 disulfides stabilise this stretch: Cys-51–Cys-65 and Cys-58–Cys-70.

The protein belongs to the neurotoxin 10 (Hwtx-1) family. 13 (Hntx-13) subfamily. Expressed by the venom gland.

The protein resides in the secreted. In terms of biological role, ion channel inhibitor. The sequence is that of U7-theraphotoxin-Hhn1k from Cyriopagopus hainanus (Chinese bird spider).